The chain runs to 98 residues: uncharacterized protein (98 aa).

This is an uncharacterized protein from Frog virus 3 (isolate Goorha) (FV-3).